Reading from the N-terminus, the 254-residue chain is 3-beta-hydroxysteroid dehydrogenase (254 aa).

Residues 12–40 and Asp-61 each bind NAD(+); that span reads VTGG…SDIN. Ser-139 contacts substrate. The Proton acceptor role is filled by Tyr-152. Lys-156 provides a ligand contact to NAD(+).

Belongs to the short-chain dehydrogenases/reductases (SDR) family. Homotetramer.

The catalysed reaction is testosterone + NAD(+) = androst-4-ene-3,17-dione + NADH + H(+). It carries out the reaction testosterone + NADP(+) = androst-4-ene-3,17-dione + NADPH + H(+). The chain is 3-beta-hydroxysteroid dehydrogenase from Comamonas testosteroni (Pseudomonas testosteroni).